We begin with the raw amino-acid sequence, 511 residues long: Cytochrome P450 monooxygenase nodR (511 aa).

The helical transmembrane segment at 8 to 28 threads the bilayer; that stretch reads ILFPISWEQSPIFLAVGLIFA. Residues Asn-76 and Asn-373 are each glycosylated (N-linked (GlcNAc...) asparagine). Cys-452 lines the heme pocket.

It belongs to the cytochrome P450 family. Requires heme as cofactor.

It localises to the membrane. It participates in secondary metabolite biosynthesis. Cytochrome P450 monooxygenase; part of the gene cluster that mediates the biosynthesis of the indole diterpenes nodulisporic acids (NA). Nodulisporic acid A (NAA) and its chemically modified derivatives are of particular significance because of their highly potent insecticidal activity against blood-feeding arthropods and lack of observable adverse effects on mammals, in particular the tremogenicity associated with the paspaline-derived IDTs is not observed. The geranylgeranyl diphosphate (GGPP) synthase ggs1, localized outside of the cluster, is proposed to catalyze the first step in nodulisporic acid biosynthesis via conversion of farnesyl pyrophosphate and isopentyl pyrophosphate into geranylgeranyl pyrophosphate (GGPP). Condensation of indole-3-glycerol phosphate with GGPP by the prenyl transferase nodC then forms 3-geranylgeranylindole (3-GGI). Epoxidation by the FAD-dependent monooxygenase nodM leads to a single-epoxidized-GGI that is substrate of the terpene cyclase nodB for cyclization to yield emindole SB. The terminal methyl carbon, C28, of emindole SB is then oxidized by the cytochrome P450 monooxygenase nodW to produce nodulisporic acid F (NAF), the pentacyclic core of NAA. NAF is converted to nodulisporic acid E (NAE) via prenylation. This step is probably performed by one of the indole diterpene prenyltransferases nodD1 or nodD2. Several oxidation steps performed by the FAD-linked oxidoreductase nodO and one of the cytochrome P450 monooxygenase nodR, nodX or nodZ further convert NAE to nodulisporic acid D (NAD). NAD is substrate of cytochrome P450 monooxygenase nodJ to produce the precursor of nodulisporic acid C (NAC), converted to NAC by one of the indole diterpene prenyltransferases nodD1 or nodD2. The FAD-dependent monooxygenase nodY2 then oxidizes NAC to nodulisporic acid B (NAB). Finally NAB is converted to NAA by one of the cytochrome P450 monooxygenases nodR, nodX or nodZ. In Hypoxylon pulicicidum, this protein is Cytochrome P450 monooxygenase nodR.